We begin with the raw amino-acid sequence, 436 residues long: 23S rRNA (uracil(1939)-C(5))-methyltransferase RlmD (436 aa).

The region spanning 10-68 is the TRAM domain; it reads KQKTTQKIVAEIQDLDYQGLGVAKIQGKTWFIENALPTEKVEAVVTDEKRQYGLATAQK. [4Fe-4S] cluster-binding residues include Cys-81, Cys-87, Cys-90, and Cys-168. The S-adenosyl-L-methionine site is built by Gln-270, Phe-299, Asn-304, Glu-320, Asp-347, and Asp-368. Cys-394 functions as the Nucleophile in the catalytic mechanism.

It belongs to the class I-like SAM-binding methyltransferase superfamily. RNA M5U methyltransferase family. RlmD subfamily.

The catalysed reaction is uridine(1939) in 23S rRNA + S-adenosyl-L-methionine = 5-methyluridine(1939) in 23S rRNA + S-adenosyl-L-homocysteine + H(+). Its function is as follows. Catalyzes the formation of 5-methyl-uridine at position 1939 (m5U1939) in 23S rRNA. In Haemophilus parainfluenzae (strain T3T1), this protein is 23S rRNA (uracil(1939)-C(5))-methyltransferase RlmD.